The chain runs to 281 residues: Apolipoprotein E (281 aa).

The signal sequence occupies residues 1 to 18 (MKVLWAALLIALLAGCQG). 5 consecutive repeat copies span residues 82 to 103 (ALMD…EQLS), 104 to 125 (PVAE…ARLG), 126 to 147 (ADME…AMLG), 148 to 169 (QSTD…TVSY), and 198 to 219 (TRME…EQVE). Residues 82–219 (ALMDETMKEL…RLDEVKEQVE (138 aa)) are 5 X 22 AA approximate tandem repeats. M145 is modified (methionine sulfoxide). Phosphoserine is present on S149. The segment at 160–170 (HLRKLRTVSYT) is LDL and other lipoprotein receptors binding. Residues 164–167 (LRTV) and 193–200 (GERLRTRM) contribute to the heparin site. The homooligomerization stretch occupies residues 230 to 281 (QQMRLQAEAFQARLKSWFEPLVEDMQRQWAGLVEKVQAAVGASAAPVPSDNH). Residues 242 to 254 (RLKSWFEPLVEDM) are specificity for association with VLDL.

It belongs to the apolipoprotein A1/A4/E family. Homotetramer. May interact with ABCA1; functionally associated with ABCA1 in the biogenesis of HDLs. May interact with APP/A4 amyloid-beta peptide; the interaction is extremely stable in vitro but its physiological significance is unclear. May interact with MAPT. May interact with MAP2. In the cerebrospinal fluid, interacts with secreted SORL1. Interacts with PMEL; this allows the loading of PMEL luminal fragment on ILVs to induce fibril nucleation. APOE exists as multiple glycosylated and sialylated glycoforms within cells and in plasma. The extent of glycosylation and sialylation are tissue and context specific. In terms of processing, glycated in plasma VLDL. Post-translationally, phosphorylated by FAM20C in the extracellular medium.

The protein resides in the secreted. Its subcellular location is the extracellular space. It is found in the extracellular matrix. The protein localises to the extracellular vesicle. It localises to the endosome. The protein resides in the multivesicular body. In terms of biological role, APOE is an apolipoprotein, a protein associating with lipid particles, that mainly functions in lipoprotein-mediated lipid transport between organs via the plasma and interstitial fluids. APOE is a core component of plasma lipoproteins and is involved in their production, conversion and clearance. Apolipoproteins are amphipathic molecules that interact both with lipids of the lipoprotein particle core and the aqueous environment of the plasma. As such, APOE associates with chylomicrons, chylomicron remnants, very low density lipoproteins (VLDL) and intermediate density lipoproteins (IDL) but shows a preferential binding to high-density lipoproteins (HDL). It also binds a wide range of cellular receptors including the LDL receptor/LDLR, the LDL receptor-related proteins LRP1, LRP2 and LRP8 and the very low-density lipoprotein receptor/VLDLR that mediate the cellular uptake of the APOE-containing lipoprotein particles. Finally, APOE also has a heparin-binding activity and binds heparan-sulfate proteoglycans on the surface of cells, a property that supports the capture and the receptor-mediated uptake of APOE-containing lipoproteins by cells. A main function of APOE is to mediate lipoprotein clearance through the uptake of chylomicrons, VLDLs, and HDLs by hepatocytes. APOE is also involved in the biosynthesis by the liver of VLDLs as well as their uptake by peripheral tissues ensuring the delivery of triglycerides and energy storage in muscle, heart and adipose tissues. By participating in the lipoprotein-mediated distribution of lipids among tissues, APOE plays a critical role in plasma and tissues lipid homeostasis. APOE is also involved in two steps of reverse cholesterol transport, the HDLs-mediated transport of cholesterol from peripheral tissues to the liver, and thereby plays an important role in cholesterol homeostasis. First, it is functionally associated with ABCA1 in the biogenesis of HDLs in tissues. Second, it is enriched in circulating HDLs and mediates their uptake by hepatocytes. APOE also plays an important role in lipid transport in the central nervous system, regulating neuron survival and sprouting. This Aotus nancymaae (Ma's night monkey) protein is Apolipoprotein E (APOE).